Consider the following 370-residue polypeptide: Proto-oncogene Wnt-1 (370 aa).

Residues 1–27 (MGLWALLPSWVSTTLLLALTALPAALA) form the signal peptide. Asn-29 carries N-linked (GlcNAc...) asparagine glycosylation. 11 cysteine pairs are disulfide-bonded: Cys-93–Cys-104, Cys-143–Cys-151, Cys-153–Cys-170, Cys-218–Cys-232, Cys-220–Cys-227, Cys-299–Cys-330, Cys-315–Cys-325, Cys-329–Cys-369, Cys-345–Cys-360, Cys-347–Cys-357, and Cys-352–Cys-353. Ser-224 carries the O-palmitoleoyl serine; by PORCN lipid modification. 2 N-linked (GlcNAc...) asparagine glycosylation sites follow: Asn-316 and Asn-346. N-linked (GlcNAc...) asparagine glycosylation is present at Asn-359.

Belongs to the Wnt family. Forms a soluble 1:1 complex with AFM; this prevents oligomerization and is required for prolonged biological activity. The complex with AFM may represent the physiological form in body fluids. Interacts with PORCN. Interacts with RSPO1, RSPO2 and RSPO3. Interacts with WLS. Palmitoleoylation is required for efficient binding to frizzled receptors. Palmitoleoylation is necessary for proper trafficking to cell surface. Depalmitoleoylated by NOTUM, leading to inhibit Wnt signaling pathway. In terms of tissue distribution, testis and mid-gestational embryos. In the testis, detected only in postmeiotic germ cells undergoing differentiation from round spermatids into mature spermatozoa. In the embryos, expression is restricted to the developing CNS in regions of the neural tube other than the telencephalon. Expressed in osteoblast; expression levels increase with advancing osteoblast differentiation. Expressed in the brain, femur, spleen, and hematopoietic bone marrow.

The protein resides in the secreted. It localises to the extracellular space. It is found in the extracellular matrix. Functionally, ligand for members of the frizzled family of seven transmembrane receptors. Acts in the canonical Wnt signaling pathway by promoting beta-catenin-dependent transcriptional activation. In some developmental processes, is also a ligand for the coreceptor RYK, thus triggering Wnt signaling. Plays an essential role in the development of the embryonic brain and central nervous system (CNS). Has a role in osteoblast function, bone development and bone homeostasis. In Mus musculus (Mouse), this protein is Proto-oncogene Wnt-1 (Wnt1).